Here is a 268-residue protein sequence, read N- to C-terminus: Trans-aconitate 2-methyltransferase (268 aa).

It belongs to the methyltransferase superfamily. Tam family.

It is found in the cytoplasm. The catalysed reaction is trans-aconitate + S-adenosyl-L-methionine = (E)-3-(methoxycarbonyl)pent-2-enedioate + S-adenosyl-L-homocysteine. Catalyzes the S-adenosylmethionine monomethyl esterification of trans-aconitate. This chain is Trans-aconitate 2-methyltransferase, found in Delftia acidovorans (strain DSM 14801 / SPH-1).